The following is a 777-amino-acid chain: Ethylene receptor 4 (777 aa).

3 helical membrane passes run L49–A69, A77–F97, and A113–I133. The Cu cation site is built by C88 and H92. Positions D184–L344 constitute a GAF domain. One can recognise a Histidine kinase domain in the interval A387 to S521. H390 bears the Phosphohistidine; by autocatalysis mark. Residues R645–L774 enclose the Response regulatory domain. Position 696 is a 4-aspartylphosphate (D696).

It belongs to the ethylene receptor family. Cu cation serves as cofactor.

The protein localises to the endoplasmic reticulum membrane. It catalyses the reaction ATP + protein L-histidine = ADP + protein N-phospho-L-histidine.. Ethylene receptor related to bacterial two-component regulators. Acts as a redundant negative regulator of ethylene signaling. The chain is Ethylene receptor 4 from Oryza sativa subsp. indica (Rice).